The chain runs to 447 residues: NADH-quinone oxidoreductase subunit F (447 aa).

An NAD(+)-binding site is contributed by 61–70 (GRGGAGFSTG). FMN is bound at residue 174–221 (GAGRYICGEETALINSLEGRRANPRAKPPFPAVFGLWGKPTCVNNVET). Positions 352, 355, 358, and 399 each coordinate [4Fe-4S] cluster.

The protein belongs to the complex I 51 kDa subunit family. As to quaternary structure, composed of 13 different subunits. Subunits NuoCD, E, F, and G constitute the peripheral sector of the complex. [4Fe-4S] cluster is required as a cofactor. It depends on FMN as a cofactor.

The catalysed reaction is a quinone + NADH + 5 H(+)(in) = a quinol + NAD(+) + 4 H(+)(out). In terms of biological role, NDH-1 shuttles electrons from NADH, via FMN and iron-sulfur (Fe-S) centers, to quinones in the respiratory chain. Couples the redox reaction to proton translocation (for every two electrons transferred, four hydrogen ions are translocated across the cytoplasmic membrane), and thus conserves the redox energy in a proton gradient. This chain is NADH-quinone oxidoreductase subunit F (nuoF), found in Buchnera aphidicola subsp. Schizaphis graminum (strain Sg).